The following is a 571-amino-acid chain: Proline--tRNA ligase (571 aa).

This sequence belongs to the class-II aminoacyl-tRNA synthetase family. ProS type 1 subfamily. As to quaternary structure, homodimer.

Its subcellular location is the cytoplasm. The enzyme catalyses tRNA(Pro) + L-proline + ATP = L-prolyl-tRNA(Pro) + AMP + diphosphate. Functionally, catalyzes the attachment of proline to tRNA(Pro) in a two-step reaction: proline is first activated by ATP to form Pro-AMP and then transferred to the acceptor end of tRNA(Pro). As ProRS can inadvertently accommodate and process non-cognate amino acids such as alanine and cysteine, to avoid such errors it has two additional distinct editing activities against alanine. One activity is designated as 'pretransfer' editing and involves the tRNA(Pro)-independent hydrolysis of activated Ala-AMP. The other activity is designated 'posttransfer' editing and involves deacylation of mischarged Ala-tRNA(Pro). The misacylated Cys-tRNA(Pro) is not edited by ProRS. The chain is Proline--tRNA ligase from Pseudomonas putida (strain W619).